Reading from the N-terminus, the 412-residue chain is D-nopaline dehydrogenase (412 aa).

The protein belongs to the lysopine/nopaline/octopine/opine/vitopine dehydrogenases family. Homotetramer.

The catalysed reaction is D-nopaline + NADP(+) + H2O = L-arginine + 2-oxoglutarate + NADPH + H(+). The sequence is that of D-nopaline dehydrogenase (nos) from Agrobacterium vitis (Rhizobium vitis).